Consider the following 647-residue polypeptide: Probable cobalt/nickel-exporting P-type ATPase (647 aa).

5 consecutive transmembrane segments (helical) span residues 33–53 (WAAA…LGAP), 55–75 (AVVW…PAWV), 94–114 (AAIG…IVIF), 260–280 (AGVV…GADL), and 291–311 (MIVA…LSAI). The active-site 4-aspartylphosphate intermediate is aspartate 339. Positions 532 and 536 each coordinate Mg(2+). The chain crosses the membrane as a helical span at residues 587 to 607 (VIANLVMAGAAITTLVLWDLF).

The protein belongs to the cation transport ATPase (P-type) (TC 3.A.3) family. Type IB subfamily.

It localises to the cell membrane. The enzyme catalyses Ni(2+)(out) + ATP + H2O = Ni(2+)(in) + ADP + phosphate + H(+). It carries out the reaction Co(2+)(out) + ATP + H2O = Co(2+)(in) + ADP + phosphate + H(+). In terms of biological role, involved in heavy metal homeostasis. Probably exports nickel and cobalt ions out of the cell. In Mycolicibacterium smegmatis (strain ATCC 700084 / mc(2)155) (Mycobacterium smegmatis), this protein is Probable cobalt/nickel-exporting P-type ATPase (ctpD).